Reading from the N-terminus, the 354-residue chain is Methylthioribose-1-phosphate isomerase (354 aa).

Substrate contacts are provided by residues 58–60 (RGA), Arg101, and Gln204. Asp245 serves as the catalytic Proton donor. 255–256 (NK) provides a ligand contact to substrate.

The protein belongs to the eIF-2B alpha/beta/delta subunits family. MtnA subfamily.

It catalyses the reaction 5-(methylsulfanyl)-alpha-D-ribose 1-phosphate = 5-(methylsulfanyl)-D-ribulose 1-phosphate. The protein operates within amino-acid biosynthesis; L-methionine biosynthesis via salvage pathway; L-methionine from S-methyl-5-thio-alpha-D-ribose 1-phosphate: step 1/6. In terms of biological role, catalyzes the interconversion of methylthioribose-1-phosphate (MTR-1-P) into methylthioribulose-1-phosphate (MTRu-1-P). The sequence is that of Methylthioribose-1-phosphate isomerase from Xanthomonas campestris pv. campestris (strain ATCC 33913 / DSM 3586 / NCPPB 528 / LMG 568 / P 25).